The sequence spans 706 residues: MNSLFASTARGLEELLKSELEALGAHACKVVQGGVHFQGDDRLLYQSLLWSRLASRILLPLNEFRVHSDLDLYLGVQAIDWTSIFGVDKTFAVHFSGVNEEIRNSQYGALKVKDAIVDSFTRKIEQRPTVAKQQPDIRVNVFLQRDMASVALDLSGEGLHQRGYRDLTGQAPLKESLAAAIVQRSGWQPGTPMLDPMCGSGTLLIEAAMIASDRAPGLHRQHWGFTAWNGHNVDLWREVITEAQVRARRGLQETTSRFFGSDIDRRVIEMARGNARRAGVAELITFNVNDVAKLTNPLPEGPTGTVVCNPPYGERLESEPALIALHNMLGRIMKSAFGGWQLSLFSASPELLSCLQLRAERQFKAKNGPLDCVQKNYQLAENPLGAGGVQVAEDFANRLRKNLKKLDKWAKQQGIECYRLYDADLPEYNVAVDRYGSKVVVQEYAPPKTIDAQKARQRLFDVINATLAVLELPSNQLILKTRERQKGKNQYEKLAQKGEFLLVEEFNAKLWVNLTDYLDTGLFLDHRIARRMLGEMSKGKDFLNLFAYTGTASVHAGLGGARSTTTVDMSRTYLEWAEKNLRVNGLTGKQHRLIHADCLSWMQNADEQFDVIFIDPPTFSNSKRMENTFDVQRDHLALMQDLKRLLRRNGTIMFSNNKRGFQMDMAGLSALGLEAKEITAQTQSQDFARNRQIHNCWLLTHAGEGK.

The THUMP domain maps to 43–154 (LLYQSLLWSR…RDMASVALDL (112 aa)).

This sequence belongs to the methyltransferase superfamily. RlmKL family.

It is found in the cytoplasm. The enzyme catalyses guanosine(2445) in 23S rRNA + S-adenosyl-L-methionine = N(2)-methylguanosine(2445) in 23S rRNA + S-adenosyl-L-homocysteine + H(+). The catalysed reaction is guanosine(2069) in 23S rRNA + S-adenosyl-L-methionine = N(2)-methylguanosine(2069) in 23S rRNA + S-adenosyl-L-homocysteine + H(+). In terms of biological role, specifically methylates the guanine in position 2445 (m2G2445) and the guanine in position 2069 (m7G2069) of 23S rRNA. The polypeptide is Ribosomal RNA large subunit methyltransferase K/L (Serratia proteamaculans (strain 568)).